Here is a 98-residue protein sequence, read N- to C-terminus: Integration host factor subunit alpha (98 aa).

It belongs to the bacterial histone-like protein family. Heterodimer of an alpha and a beta chain.

Its function is as follows. This protein is one of the two subunits of integration host factor, a specific DNA-binding protein that functions in genetic recombination as well as in transcriptional and translational control. The protein is Integration host factor subunit alpha of Actinobacillus pleuropneumoniae serotype 5b (strain L20).